The following is a 422-amino-acid chain: Lipoyl synthase, mitochondrial (422 aa).

The transit peptide at 1–34 (MAASSTRLRCLYASSAPAWKKSPSQSIISLSRHY) directs the protein to the mitochondrion. A compositionally biased stretch (polar residues) spans 37–48 (TSSTTPSLNPDE). A disordered region spans residues 37–70 (TSSTTPSLNPDESSSSSSSTIPKRRKTTTFRDKL). Residues Cys-146, Cys-151, Cys-157, Cys-177, Cys-181, Cys-184, and Ser-383 each coordinate [4Fe-4S] cluster. The region spanning 160–372 (GSDKSAATAT…RQRALEMGFL (213 aa)) is the Radical SAM core domain.

The protein belongs to the radical SAM superfamily. Lipoyl synthase family. It depends on [4Fe-4S] cluster as a cofactor.

The protein localises to the mitochondrion. It carries out the reaction [[Fe-S] cluster scaffold protein carrying a second [4Fe-4S](2+) cluster] + N(6)-octanoyl-L-lysyl-[protein] + 2 oxidized [2Fe-2S]-[ferredoxin] + 2 S-adenosyl-L-methionine + 4 H(+) = [[Fe-S] cluster scaffold protein] + N(6)-[(R)-dihydrolipoyl]-L-lysyl-[protein] + 4 Fe(3+) + 2 hydrogen sulfide + 2 5'-deoxyadenosine + 2 L-methionine + 2 reduced [2Fe-2S]-[ferredoxin]. It functions in the pathway protein modification; protein lipoylation via endogenous pathway; protein N(6)-(lipoyl)lysine from octanoyl-[acyl-carrier-protein]: step 2/2. In terms of biological role, catalyzes the radical-mediated insertion of two sulfur atoms into the C-6 and C-8 positions of the octanoyl moiety bound to the lipoyl domains of lipoate-dependent enzymes, thereby converting the octanoylated domains into lipoylated derivatives. This is Lipoyl synthase, mitochondrial from Talaromyces stipitatus (strain ATCC 10500 / CBS 375.48 / QM 6759 / NRRL 1006) (Penicillium stipitatum).